Here is a 430-residue protein sequence, read N- to C-terminus: Ribosomal protein uS12 methylthiotransferase RimO (430 aa).

The region spanning 1 to 116 is the MTTase N-terminal domain; the sequence is MRVGIKVLGC…IANAIENGTD (116 aa). Residues Cys10, Cys46, Cys79, Cys148, Cys152, and Cys155 each contribute to the [4Fe-4S] cluster site. In terms of domain architecture, Radical SAM core spans 134–365; the sequence is LEERPYAYVK…LLQAEISNSR (232 aa). The TRAM domain maps to 367–430; sequence DRFVGKKLKF…DEYDMWGSVI (64 aa).

Belongs to the methylthiotransferase family. RimO subfamily. [4Fe-4S] cluster serves as cofactor.

It is found in the cytoplasm. It catalyses the reaction L-aspartate(89)-[ribosomal protein uS12]-hydrogen + (sulfur carrier)-SH + AH2 + 2 S-adenosyl-L-methionine = 3-methylsulfanyl-L-aspartate(89)-[ribosomal protein uS12]-hydrogen + (sulfur carrier)-H + 5'-deoxyadenosine + L-methionine + A + S-adenosyl-L-homocysteine + 2 H(+). Functionally, catalyzes the methylthiolation of an aspartic acid residue of ribosomal protein uS12. The protein is Ribosomal protein uS12 methylthiotransferase RimO of Thermotoga petrophila (strain ATCC BAA-488 / DSM 13995 / JCM 10881 / RKU-1).